A 308-amino-acid chain; its full sequence is Inactive C-alpha-formylglycine-generating enzyme 2 (308 aa).

The first 33 residues, Met1 to Ala33, serve as a signal peptide directing secretion. Residues Cys163 and Cys297 are joined by a disulfide bond. Residue Asn198 is glycosylated (N-linked (GlcNAc...) asparagine). 8 residues coordinate Ca(2+): Asn201, Leu202, Asp215, Phe217, Asp236, Gly239, Val241, and Glu243. A compositionally biased stretch (polar residues) spans Arg281–Asp291. The segment at Arg281–Leu308 is disordered. A Non-canonical ER retention motif motif is present at residues Lys305–Leu308.

The protein belongs to the sulfatase-modifying factor family. In terms of assembly, homodimer and heterodimer with SUMF1.

It is found in the endoplasmic reticulum lumen. In terms of biological role, lacks formylglycine generating activity and is unable to convert newly synthesized inactive sulfatases to their active form. Inhibits the activation of sulfatases by SUMF1. The chain is Inactive C-alpha-formylglycine-generating enzyme 2 from Mus musculus (Mouse).